A 135-amino-acid polypeptide reads, in one-letter code: Serine protease inhibitor swm-1 (135 aa).

Positions 1-16 (MRILVIITCIVAVATA) are cleaved as a signal peptide. 10 disulfides stabilise this stretch: Cys-20–Cys-53, Cys-29–Cys-48, Cys-33–Cys-44, Cys-37–Cys-73, Cys-55–Cys-67, Cys-80–Cys-114, Cys-89–Cys-109, Cys-93–Cys-105, Cys-97–Cys-133, and Cys-116–Cys-127. TIL domains follow at residues 20–73 (CEAN…VSEC) and 80–133 (CPEN…KKDC). A glycan (N-linked (GlcNAc...) asparagine) is linked at Asn-83.

As to expression, in male, expressed in the vas deferens cuboidal cells and, in posterior body wall and male-specific diagonal muscles. In hermaphrodites, expressed in posterior body wall muscles and spermatheca.

It localises to the secreted. Its subcellular location is the cytoplasmic vesicle. The protein localises to the secretory vesicle lumen. Serine protease inhibitor. Probably by inhibiting serine protease tyr-5 in males, prevents the maturation of spermatids into mature motile spermatozoa until their transfer into a hermaphrodite. Also required for efficient sperm transfer and thus for male fertility. This Caenorhabditis elegans protein is Serine protease inhibitor swm-1.